Here is a 377-residue protein sequence, read N- to C-terminus: Nitric oxide reductase FlRd-NAD(+) reductase (377 aa).

Belongs to the FAD-dependent oxidoreductase family. FAD serves as cofactor.

Its subcellular location is the cytoplasm. It carries out the reaction 2 reduced [nitric oxide reductase rubredoxin domain] + NAD(+) + H(+) = 2 oxidized [nitric oxide reductase rubredoxin domain] + NADH. It functions in the pathway nitrogen metabolism; nitric oxide reduction. In terms of biological role, one of at least two accessory proteins for anaerobic nitric oxide (NO) reductase. Reduces the rubredoxin moiety of NO reductase. The sequence is that of Nitric oxide reductase FlRd-NAD(+) reductase from Salmonella schwarzengrund (strain CVM19633).